Reading from the N-terminus, the 147-residue chain is Large ribosomal subunit protein uL16 (147 aa).

The protein belongs to the universal ribosomal protein uL16 family. In terms of assembly, part of the 50S ribosomal subunit.

Its function is as follows. Binds 23S rRNA and is also seen to make contacts with the A and possibly P site tRNAs. The chain is Large ribosomal subunit protein uL16 from Clostridium acetobutylicum (strain ATCC 824 / DSM 792 / JCM 1419 / IAM 19013 / LMG 5710 / NBRC 13948 / NRRL B-527 / VKM B-1787 / 2291 / W).